The following is a 182-amino-acid chain: ADP-ribosylation factor-like protein 3 (182 aa).

G2 is lipidated: N-myristoyl glycine. S5 carries the phosphoserine modification. Residues 24-31, T48, 67-71, G70, 126-129, and 159-161 each bind GTP; these read GLDNAGKT, DIGGQ, NKQD, and SAL. T31 and T48 together coordinate Mg(2+).

Belongs to the small GTPase superfamily. Arf family. As to quaternary structure, found in a complex with ARL3, RP2 and UNC119 (or UNC119B); RP2 induces hydrolysis of GTP ARL3 in the complex, leading to the release of UNC119 (or UNC119B). Interacts with RP2; interaction is direct and stimulated with the activated GTP-bound form of ARL3. Interacts with SYS1. Interacts with ARL2BP; the GTP-bound form interacts with ARL2BP. Microtubule-associated protein. Does not interact with TBCC. Interacts with RP2. Interacts with PDE6D; the interaction occurs specifically with the GTP-bound form of ARL3. Interacts with GGA1; the interaction recruits PKD1:PKD2 complex to trans-Golgi network and is required for ciliary targeting of PKD1:PKD2 complex. Interacts with DNAAF9.

It localises to the golgi apparatus membrane. The protein localises to the cytoplasm. The protein resides in the cytoskeleton. Its subcellular location is the spindle. It is found in the nucleus. It localises to the microtubule organizing center. The protein localises to the centrosome. The protein resides in the cell projection. Its subcellular location is the cilium. Small GTP-binding protein which cycles between an inactive GDP-bound and an active GTP-bound form, and the rate of cycling is regulated by guanine nucleotide exchange factors (GEF) and GTPase-activating proteins (GAP). Required for normal cytokinesis and cilia signaling. Required for targeting proteins to the cilium, including myristoylated NPHP3 and prenylated INPP5E. Targets NPHP3 to the ciliary membrane by releasing myristoylated NPHP3 from UNC119B cargo adapter into the cilium. Requires assistance from GTPase-activating proteins (GAPs) like RP2 and PDE6D, in order to cycle between inactive GDP-bound and active GTP-bound forms. Required for PKD1:PKD2 complex targeting from the trans-Golgi network to the cilium. This chain is ADP-ribosylation factor-like protein 3, found in Mus musculus (Mouse).